We begin with the raw amino-acid sequence, 145 residues long: MAHFQNQYSAPEVTQTDAYGNPTRRTDEYGNPIPTQETGRGILGIGGHHHGGHHGLHRTGSSSSSSSSSEDEGTGKKKKGLKERLKEKIPGNKEHQSQATSTTTPGQGPTYHQHHREERSDGQDQGEAPWSPQPLISCLWSAISY.

Residues 1–18 show a composition bias toward polar residues; sequence MAHFQNQYSAPEVTQTDA. Positions 1–136 are disordered; that stretch reads MAHFQNQYSA…EAPWSPQPLI (136 aa). Residues 47–57 show a composition bias toward basic residues; that stretch reads GHHHGGHHGLH. Residues 58–68 are compositionally biased toward low complexity; that stretch reads RTGSSSSSSSS. Basic and acidic residues predominate over residues 82–96; it reads KERLKEKIPGNKEHQ. A compositionally biased stretch (polar residues) spans 97–107; it reads SQATSTTTPGQ.

The protein belongs to the plant dehydrin family.

Its function is as follows. LEA protein are late embryogenesis abundant in higher plant seed embryos. There are two subsets of LEA proteins (5a, and 5b), the first ones are expressed when the cotyledon weight reach 80 mg and the second set are expressed above 100 mg. The function of those proteins is not known. The polypeptide is Late embryogenesis abundant protein D-11 (Gossypium hirsutum (Upland cotton)).